A 365-amino-acid chain; its full sequence is 2'-hydroxybiphenyl-2-sulfinate desulfinase (365 aa).

Cys27 is a catalytic residue. Residues Cys27, His60, and Arg70 each coordinate 2'-hydroxybiphenyl-2-sulfinate. Arg70 is a catalytic residue.

It belongs to the DszB desulfinase family. As to quaternary structure, monomer.

It localises to the cytoplasm. It carries out the reaction 2'-hydroxybiphenyl-2-sulfinate + H2O = biphenyl-2-ol + sulfite + H(+). It participates in sulfur metabolism; dibenzothiophene degradation. Its function is as follows. Catalyzes the third and final step of the '4S' desulfurization pathway that removes covalently bound sulfur from dibenzothiophene (DBT) without breaking carbon-carbon bonds. Oxidizes 2-(2'-hydroxyphenyl)benzene sulphinate (HBPS) to 2-hydroxybiphenyl (HBP) plus sulfite. The rate-limiting step of the '4S' desulfurization pathway. This is 2'-hydroxybiphenyl-2-sulfinate desulfinase from Rhodococcus erythropolis (Arthrobacter picolinophilus).